Reading from the N-terminus, the 627-residue chain is Muscarinic acetylcholine receptor gar-2 (627 aa).

The Extracellular segment spans residues 1–9 (MAVASVLLA). The helical transmembrane segment at 10-30 (LFMLFLSIVTVIGNLAVLLSY) threads the bilayer. Over 31–41 (YLDKNIRQPTN) the chain is Cytoplasmic. A helical transmembrane segment spans residues 42-62 (YFIFSLAISDLLIGLEGIPVY). At 63-81 (TAFYLNNNEWIWGDVLCDL) the chain is on the extracellular side. Cysteines 79 and 160 form a disulfide. A helical membrane pass occupies residues 82–102 (WLSIDYIVCLASIYTVLGITV). The Cytoplasmic portion of the chain corresponds to 103 to 122 (DRYYSVKKPATYRNWRTPGR). A helical membrane pass occupies residues 123–143 (VVLIIIFIWLVPSILFSVSIF). Residues 144-172 (GYGTFTGTGRILKETECYVQFMTNPYLNM) lie on the Extracellular side of the membrane. A helical transmembrane segment spans residues 173–193 (GMYISYYWTTLFVMLYLYWGI). Residues 194–549 (YRAAKKLALK…ENRARKALRT (356 aa)) lie on the Cytoplasmic side of the membrane. Disordered regions lie at residues 222–266 (VSVR…VGTP), 423–442 (REDE…ENGG), and 449–475 (ANDE…HDPN). Residues 231-264 (NSSSDSPNDTSNSSKCFRTAPPTTTVQTTQTNVG) are compositionally biased toward low complexity. The segment covering 459-475 (KESEQKEEMTPENHDPN) has biased composition (basic and acidic residues). Residues 550-570 (ITFILGSFIILWTPFYVLATI) traverse the membrane as a helical segment. Residues 571 to 586 (YGFCETCKASPSFNTL) are Extracellular-facing. The chain crosses the membrane as a helical span at residues 587–609 (YTISYYLCYMNSPLNPFCYAMAN). At 610-627 (QQFKKTLTRIFKGDFRRV) the chain is on the cytoplasmic side.

This sequence belongs to the G-protein coupled receptor 1 family. Muscarinic acetylcholine receptor subfamily. As to expression, expressed in putative sensory neurons, many cells of the ventral cord and in the HSN motor neurons. Expressed in some cholinergic motor neurons and GABAergic motor neurons, which are the two major types of ventral cord motor neurons.

Its subcellular location is the cell membrane. The protein resides in the cell projection. The protein localises to the axon. Functionally, the muscarinic acetylcholine receptor mediates various cellular responses, including inhibition of adenylate cyclase, breakdown of phosphoinositides and modulation of potassium channels through the action of G proteins. Primary transducing effect is Pi turnover. Regulates the activity of ventral cord motor neurons. Couples to the G(o)-alpha G-protein subunit goa-1 to negatively regulate cholinergic receptor activity in the presence of high levels of the neurotransmitter acetylcholine in ventral cord motor neurons. As acetylcholine depolarizes body wall muscles, modulation of acetylcholine levels most likely results in the control locomotory behavior and egg-laying. The chain is Muscarinic acetylcholine receptor gar-2 from Caenorhabditis elegans.